We begin with the raw amino-acid sequence, 369 residues long: Probable dual-specificity RNA methyltransferase RlmN (369 aa).

Residue E106 is the Proton acceptor of the active site. Positions 118–354 constitute a Radical SAM core domain; the sequence is EARRLTVCVS…VTVRRSRGQD (237 aa). Residues C125 and C359 are joined by a disulfide bond. [4Fe-4S] cluster contacts are provided by C132, C136, and C139. S-adenosyl-L-methionine-binding positions include 183-184, S215, 238-240, and N316; these read GE and SLH. The S-methylcysteine intermediate role is filled by C359.

Belongs to the radical SAM superfamily. RlmN family. It depends on [4Fe-4S] cluster as a cofactor.

The protein localises to the cytoplasm. The catalysed reaction is adenosine(2503) in 23S rRNA + 2 reduced [2Fe-2S]-[ferredoxin] + 2 S-adenosyl-L-methionine = 2-methyladenosine(2503) in 23S rRNA + 5'-deoxyadenosine + L-methionine + 2 oxidized [2Fe-2S]-[ferredoxin] + S-adenosyl-L-homocysteine. It carries out the reaction adenosine(37) in tRNA + 2 reduced [2Fe-2S]-[ferredoxin] + 2 S-adenosyl-L-methionine = 2-methyladenosine(37) in tRNA + 5'-deoxyadenosine + L-methionine + 2 oxidized [2Fe-2S]-[ferredoxin] + S-adenosyl-L-homocysteine. Specifically methylates position 2 of adenine 2503 in 23S rRNA and position 2 of adenine 37 in tRNAs. This Salinibacter ruber (strain DSM 13855 / M31) protein is Probable dual-specificity RNA methyltransferase RlmN.